Consider the following 287-residue polypeptide: 2-dehydro-3-deoxyphosphooctonate aldolase (287 aa).

It belongs to the KdsA family.

It is found in the cytoplasm. It carries out the reaction D-arabinose 5-phosphate + phosphoenolpyruvate + H2O = 3-deoxy-alpha-D-manno-2-octulosonate-8-phosphate + phosphate. Its pathway is carbohydrate biosynthesis; 3-deoxy-D-manno-octulosonate biosynthesis; 3-deoxy-D-manno-octulosonate from D-ribulose 5-phosphate: step 2/3. It participates in bacterial outer membrane biogenesis; lipopolysaccharide biosynthesis. The protein is 2-dehydro-3-deoxyphosphooctonate aldolase of Rhodopseudomonas palustris (strain TIE-1).